The chain runs to 211 residues: Ribosomal RNA small subunit methyltransferase G (211 aa).

Residues Gly-79, Leu-84, 130 to 131 (VE), and Arg-145 each bind S-adenosyl-L-methionine.

Belongs to the methyltransferase superfamily. RNA methyltransferase RsmG family.

It localises to the cytoplasm. It carries out the reaction guanosine(527) in 16S rRNA + S-adenosyl-L-methionine = N(7)-methylguanosine(527) in 16S rRNA + S-adenosyl-L-homocysteine. In terms of biological role, specifically methylates the N7 position of guanine in position 527 of 16S rRNA. The chain is Ribosomal RNA small subunit methyltransferase G from Alteromonas mediterranea (strain DSM 17117 / CIP 110805 / LMG 28347 / Deep ecotype).